Here is a 340-residue protein sequence, read N- to C-terminus: Glycerol-3-phosphate dehydrogenase [NAD(P)+] (340 aa).

NADPH contacts are provided by S11, W12, R32, R33, and K106. K106, G138, and S140 together coordinate sn-glycerol 3-phosphate. Position 142 (A142) interacts with NADPH. Residues K193, D246, S256, R257, and N258 each contribute to the sn-glycerol 3-phosphate site. The active-site Proton acceptor is K193. R257 is a binding site for NADPH. Residues V281 and E283 each contribute to the NADPH site.

It belongs to the NAD-dependent glycerol-3-phosphate dehydrogenase family.

The protein localises to the cytoplasm. The catalysed reaction is sn-glycerol 3-phosphate + NAD(+) = dihydroxyacetone phosphate + NADH + H(+). It catalyses the reaction sn-glycerol 3-phosphate + NADP(+) = dihydroxyacetone phosphate + NADPH + H(+). The protein operates within membrane lipid metabolism; glycerophospholipid metabolism. Catalyzes the reduction of the glycolytic intermediate dihydroxyacetone phosphate (DHAP) to sn-glycerol 3-phosphate (G3P), the key precursor for phospholipid synthesis. The protein is Glycerol-3-phosphate dehydrogenase [NAD(P)+] of Shouchella clausii (strain KSM-K16) (Alkalihalobacillus clausii).